Reading from the N-terminus, the 103-residue chain is Toxin BMLCL (103 aa).

The N-terminal stretch at 1–21 (MKTLLLTLVVVTIICLDLGYT) is a signal peptide. Intrachain disulfides connect Cys-24/Cys-45, Cys-27/Cys-37, Cys-38/Cys-72, Cys-76/Cys-90, and Cys-91/Cys-96.

This sequence belongs to the three-finger toxin family. Ancestral subfamily. Orphan group XVII sub-subfamily. Expressed by the venom gland.

The protein resides in the secreted. Functionally, interacts with high efficiency with both neuronal alpha-7/CHRNA7 and muscle type nicotinic acetylcholine receptors (nAChRs). Tested on human alpha-7/CHRNA7 nAChR (IC(50)=42 nM), T.californica muscle receptor (IC(50)=31 nM), L.stagnalis and A.californica acetylcholine-binding proteins (IC(50)=333 nM and 3.4 uM, respectively). This Bungarus multicinctus (Many-banded krait) protein is Toxin BMLCL.